The following is a 273-amino-acid chain: Inactive endochitinase At2g43600 (273 aa).

The N-terminal stretch at 1-22 (MTIKNVIFSLFILAILAETVFS) is a signal peptide. The 39-residue stretch at 23–61 (QNCMDTSCPGLKECCSRWGFCGTKDEYCGFFCFSGPCNI) folds into the Chitin-binding type-1 domain. 4 disulfides stabilise this stretch: cysteine 25-cysteine 37, cysteine 30-cysteine 43, cysteine 36-cysteine 50, and cysteine 54-cysteine 59. Residues 78-273 (GKIETVITSA…GVTPDQGLDC (196 aa)) are catalytic. The N-linked (GlcNAc...) asparagine glycan is linked to asparagine 99.

Belongs to the glycosyl hydrolase 19 family. Chitinase class I subfamily.

The polypeptide is Inactive endochitinase At2g43600 (Arabidopsis thaliana (Mouse-ear cress)).